The primary structure comprises 421 residues: AA11 family lytic polysaccharide monooxygenase (421 aa).

The first 19 residues, 1 to 19 (MFSKAFLSAALLGAAAVEG), serve as a signal peptide directing secretion. Residues histidine 20, histidine 79, and glutamate 93 each coordinate Cu(+). Cystine bridges form between cysteine 48-cysteine 162, cysteine 84-cysteine 110, and cysteine 201-cysteine 235. Residue asparagine 117 is glycosylated (N-linked (GlcNAc...) asparagine). The tract at residues 231–349 (GSQACTGTPT…SSSSSSSGAL (119 aa)) is disordered. The segment covering 247–285 (TAGSSGSSGSSSGSSSGGSSSSAAGSGATAPPAPAVSST) has biased composition (low complexity). Positions 304 to 314 (SPAQPTHTSAP) are enriched in polar residues. Low complexity predominate over residues 315 to 349 (SGGSSSGSGSSSGSNSGSSSGSSSSSSSSSSSGAL).

This sequence belongs to the polysaccharide monooxygenase AA11 family. Cu(2+) is required as a cofactor.

Lytic polysaccharide monooxygenase (LPMO) that depolymerizes chitin via the oxidation of scissile beta-(1-4)-glycosidic bonds, yielding C1 or C4 oxidation products. Catalysis by LPMOs requires the reduction of the active-site copper from Cu(II) to Cu(I) by a reducing agent and H(2)O(2) or O(2) as a cosubstrate. Active on chitin but has no activity on other substrates, including diverse mannans, cellulose and starch (data not shown). Primary chain cleavage yields predominantly aldonic acid oligosaccharides with even-numbered degrees of polymerization. This Aspergillus oryzae (strain ATCC 42149 / RIB 40) (Yellow koji mold) protein is AA11 family lytic polysaccharide monooxygenase.